Reading from the N-terminus, the 358-residue chain is MGNASNDSQSEDCETRQWLPPGESPAISSVMFSAGVLGNLIALALLARRWRGDVGCSAGRRSSLSLFHVLVTELVFTDLLGTCLISPVVLASYARNQTLVALAPESRACTYFAFAMTFFSLATMLMLFAMALERYLSIGHPYFYQRRVSRSGGLAVLPVIYAVSLLFCSLPLLDYGQYVQYCPGTWCFIRHGRTAYLQLYATLLLLLIVSVLACNFSVILNLIRMHRRSRRSRCGPSLGSGRGGPGARRRGERVSMAEETDHLILLAIMTITFAVCSLPFTIFAYMNETSSRKEKWDLQALRFLSINSIIDPWVFAILRPPVLRLMRSVLCCRISLRTQDATQTSCSTQSDASKQADL.

The Extracellular segment spans residues 1–23 (MGNASNDSQSEDCETRQWLPPGE). Asn3 and Asn6 each carry an N-linked (GlcNAc...) asparagine glycan. A helical transmembrane segment spans residues 24 to 47 (SPAISSVMFSAGVLGNLIALALLA). Topologically, residues 48–65 (RRWRGDVGCSAGRRSSLS) are cytoplasmic. The helical transmembrane segment at 66-91 (LFHVLVTELVFTDLLGTCLISPVVLA) threads the bilayer. Over 92–111 (SYARNQTLVALAPESRACTY) the chain is Extracellular. Asn96 carries N-linked (GlcNAc...) asparagine glycosylation. Cys109 and Cys187 are oxidised to a cystine. The helical transmembrane segment at 112–132 (FAFAMTFFSLATMLMLFAMAL) threads the bilayer. Residues 133 to 151 (ERYLSIGHPYFYQRRVSRS) are Cytoplasmic-facing. The chain crosses the membrane as a helical span at residues 152–176 (GGLAVLPVIYAVSLLFCSLPLLDYG). Residues 177-198 (QYVQYCPGTWCFIRHGRTAYLQ) are Extracellular-facing. The helical transmembrane segment at 199–223 (LYATLLLLLIVSVLACNFSVILNLI) threads the bilayer. Topologically, residues 224–262 (RMHRRSRRSRCGPSLGSGRGGPGARRRGERVSMAEETDH) are cytoplasmic. The segment at 231-253 (RSRCGPSLGSGRGGPGARRRGER) is disordered. Residues 263 to 286 (LILLAIMTITFAVCSLPFTIFAYM) form a helical membrane-spanning segment. N-linked (GlcNAc...) asparagine glycosylation occurs at Asn287. Over 287 to 299 (NETSSRKEKWDLQ) the chain is Extracellular. A helical membrane pass occupies residues 300–323 (ALRFLSINSIIDPWVFAILRPPVL). At 324 to 358 (RLMRSVLCCRISLRTQDATQTSCSTQSDASKQADL) the chain is on the cytoplasmic side.

This sequence belongs to the G-protein coupled receptor 1 family. Placenta and lung.

It localises to the cell membrane. Its function is as follows. Receptor for prostaglandin E2 (PGE2). The activity of this receptor is mediated by G(s) proteins that stimulate adenylate cyclase. The subsequent raise in intracellular cAMP is responsible for the relaxing effect of this receptor on smooth muscle. The chain is Prostaglandin E2 receptor EP2 subtype (PTGER2) from Homo sapiens (Human).